A 203-amino-acid chain; its full sequence is GTP cyclohydrolase-2 (203 aa).

49 to 53 is a GTP binding site; the sequence is RIHSE. Residues Cys54, Cys65, and Cys67 each contribute to the Zn(2+) site. Residues Gln70, 92–94, and Thr114 contribute to the GTP site; that span reads EGR. The active-site Proton acceptor is Asp126. Arg128 functions as the Nucleophile in the catalytic mechanism. Thr149 and Lys154 together coordinate GTP.

Belongs to the GTP cyclohydrolase II family. It depends on Zn(2+) as a cofactor.

It carries out the reaction GTP + 4 H2O = 2,5-diamino-6-hydroxy-4-(5-phosphoribosylamino)-pyrimidine + formate + 2 phosphate + 3 H(+). It functions in the pathway cofactor biosynthesis; riboflavin biosynthesis; 5-amino-6-(D-ribitylamino)uracil from GTP: step 1/4. In terms of biological role, catalyzes the conversion of GTP to 2,5-diamino-6-ribosylamino-4(3H)-pyrimidinone 5'-phosphate (DARP), formate and pyrophosphate. This Shewanella sp. (strain W3-18-1) protein is GTP cyclohydrolase-2.